Reading from the N-terminus, the 715-residue chain is Polyribonucleotide nucleotidyltransferase (715 aa).

2 residues coordinate Mg(2+): D498 and D504. One can recognise a KH domain in the interval 565 to 625 (PKVCMMQIKP…ETVKKTVAFI (61 aa)). One can recognise an S1 motif domain in the interval 635 to 706 (GTCYQASILR…DRGRIDFLLL (72 aa)).

It belongs to the polyribonucleotide nucleotidyltransferase family. It depends on Mg(2+) as a cofactor.

It is found in the cytoplasm. It carries out the reaction RNA(n+1) + phosphate = RNA(n) + a ribonucleoside 5'-diphosphate. Its function is as follows. Involved in mRNA degradation. Catalyzes the phosphorolysis of single-stranded polyribonucleotides processively in the 3'- to 5'-direction. The chain is Polyribonucleotide nucleotidyltransferase from Onion yellows phytoplasma (strain OY-M).